We begin with the raw amino-acid sequence, 824 residues long: DNA replication helicase (824 aa).

90-97 (GTAGAGKT) is an ATP binding site.

Belongs to the herpesviridae helicase family. In terms of assembly, associates with the primase and the primase-associated factor to form the helicase-primase complex.

It localises to the host nucleus. Component of the helicase/primase complex. Unwinds the DNA at the replication forks and generates single-stranded DNA for both leading and lagging strand synthesis. The primase synthesizes short RNA primers on the lagging strand that the polymerase elongates using dNTPs. Possesses helicase-like motifs and therefore may act as the helicase subunit of the complex. The chain is DNA replication helicase from Human herpesvirus 6B (strain Z29) (HHV-6 variant B).